A 576-amino-acid chain; its full sequence is N-acetylmuramoyl-L-alanine amidase (576 aa).

The first 21 residues, 1–21 (MAQGVLWILLGLLLWSDPGTA), serve as a signal peptide directing secretion. An N-linked (GlcNAc...) asparagine glycan is attached at asparagine 77. Residue serine 239 is modified to Phosphoserine. 2 positions are modified to deamidated asparagine: asparagine 274 and asparagine 322. The N-linked (GlcNAc...) asparagine glycan is linked to asparagine 367. One can recognise an N-acetylmuramoyl-L-alanine amidase domain in the interval 406-532 (FLYVHHTYVP…RQLVRTDCPG (127 aa)). Histidine 410 contacts Zn(2+). A disulfide bridge connects residues cysteine 419 and cysteine 425. Asparagine 485 is a glycosylation site (N-linked (GlcNAc...) asparagine). Residues histidine 522 and cysteine 530 each coordinate Zn(2+). Residues 550–576 (KPRPARSVSKRSRREPPPRTLPATDLQ) form a disordered region.

This sequence belongs to the N-acetylmuramoyl-L-alanine amidase 2 family. Requires Zn(2+) as cofactor. As to expression, strongly expressed in liver and fetal liver, and secreted into serum. Expressed to a much lesser extent in transverse colon, lymph nodes, heart, thymus, pancreas, descending colon, stomach and testis. Isoform 2 is not detected in the liver or serum.

It is found in the secreted. Its subcellular location is the membrane. It catalyses the reaction Hydrolyzes the link between N-acetylmuramoyl residues and L-amino acid residues in certain cell-wall glycopeptides.. May play a scavenger role by digesting biologically active peptidoglycan (PGN) into biologically inactive fragments. Has no direct bacteriolytic activity. The chain is N-acetylmuramoyl-L-alanine amidase (PGLYRP2) from Homo sapiens (Human).